The chain runs to 117 residues: Holo-[acyl-carrier-protein] synthase (117 aa).

The Mg(2+) site is built by Asp-6 and Glu-55.

It belongs to the P-Pant transferase superfamily. AcpS family. Mg(2+) serves as cofactor.

The protein resides in the cytoplasm. It carries out the reaction apo-[ACP] + CoA = holo-[ACP] + adenosine 3',5'-bisphosphate + H(+). Functionally, transfers the 4'-phosphopantetheine moiety from coenzyme A to a Ser of acyl-carrier-protein. This chain is Holo-[acyl-carrier-protein] synthase, found in Chlorobaculum tepidum (strain ATCC 49652 / DSM 12025 / NBRC 103806 / TLS) (Chlorobium tepidum).